A 214-amino-acid chain; its full sequence is Pyridoxine/pyridoxamine 5'-phosphate oxidase (214 aa).

Substrate is bound by residues 8 to 11 and Lys66; that span reads RINY. FMN contacts are provided by residues 61–66, 76–77, Arg82, Lys83, and Gln105; these read RILLIK and FT. Substrate contacts are provided by Tyr123, Arg127, and Ser131. Residues 140 to 141 and Trp184 contribute to the FMN site; that span reads QS. A substrate-binding site is contributed by 190-192; sequence RLH. Arg194 provides a ligand contact to FMN.

It belongs to the pyridoxamine 5'-phosphate oxidase family. In terms of assembly, homodimer. It depends on FMN as a cofactor.

It carries out the reaction pyridoxamine 5'-phosphate + O2 + H2O = pyridoxal 5'-phosphate + H2O2 + NH4(+). It catalyses the reaction pyridoxine 5'-phosphate + O2 = pyridoxal 5'-phosphate + H2O2. It functions in the pathway cofactor metabolism; pyridoxal 5'-phosphate salvage; pyridoxal 5'-phosphate from pyridoxamine 5'-phosphate: step 1/1. It participates in cofactor metabolism; pyridoxal 5'-phosphate salvage; pyridoxal 5'-phosphate from pyridoxine 5'-phosphate: step 1/1. In terms of biological role, catalyzes the oxidation of either pyridoxine 5'-phosphate (PNP) or pyridoxamine 5'-phosphate (PMP) into pyridoxal 5'-phosphate (PLP). In Burkholderia vietnamiensis (strain G4 / LMG 22486) (Burkholderia cepacia (strain R1808)), this protein is Pyridoxine/pyridoxamine 5'-phosphate oxidase.